Here is a 405-residue protein sequence, read N- to C-terminus: Beta-citrylglutamate synthase B (405 aa).

The ATP-grasp domain maps to 115 to 300 (FQELAGHGVP…VAGIVADFVL (186 aa)). ATP-binding positions include Lys154, 189–199 (QEYVKESHGRD), and Arg215. Mg(2+) contacts are provided by Asp260, Glu273, and Asn275. Mn(2+) is bound by residues Asp260, Glu273, and Asn275. A disordered region spans residues 359–387 (AMSTMSTSSTSSESEADLTETGPTPVGAN). Over residues 360–371 (MSTMSTSSTSSE) the composition is skewed to low complexity.

Belongs to the RimK family. It depends on Mg(2+) as a cofactor. Requires Mn(2+) as cofactor.

It localises to the cytoplasm. The catalysed reaction is citrate + L-glutamate + ATP = beta-citrylglutamate + ADP + phosphate + H(+). It carries out the reaction N-acetyl-L-aspartate + L-glutamate + ATP = N-acetyl-L-aspartyl-L-glutamate + ADP + phosphate + H(+). Catalyzes the synthesis of beta-citryl-L-glutamate and N-acetyl-L-aspartyl-L-glutamate. Beta-citryl-L-glutamate is synthesized more efficiently than N-acetyl-L-aspartyl-L-glutamate. In Danio rerio (Zebrafish), this protein is Beta-citrylglutamate synthase B (rimklb).